A 312-amino-acid chain; its full sequence is Olfactory receptor 5P4 (312 aa).

The Extracellular portion of the chain corresponds to 1–25 (METENDTMVTEFIILGLTDSATLRA). A glycan (N-linked (GlcNAc...) asparagine) is linked at asparagine 5. The helical transmembrane segment at 26–46 (ILFVFFLPVYIVTVVGNISII) threads the bilayer. Topologically, residues 47–54 (LLIRSSPQ) are cytoplasmic. The helical transmembrane segment at 55–75 (LHTPMYLFLSHLAFVDIGYST) threads the bilayer. At 76–99 (SVTPIMLISFLREETTIPLAGCAA) the chain is on the extracellular side. Cysteine 97 and cysteine 189 are disulfide-bonded. Residues 100–120 (QLGSDVAFGTTECFLLATMAY) traverse the membrane as a helical segment. The Cytoplasmic portion of the chain corresponds to 121-133 (DRYVAICSPLLYS). The chain crosses the membrane as a helical span at residues 134-154 (TQMSPAICCFLLGASYLGGCM). Residues 155–196 (NASSFTGCFVNLNFCGPNKVNHFFCDLFPLVKLSCGHAYIAE) lie on the Extracellular side of the membrane. The chain crosses the membrane as a helical span at residues 197–217 (ISPSISSASVLVSTLSTIIVS). Residues 218–237 (YIYILHSILRMRSAEGRNKA) lie on the Cytoplasmic side of the membrane. The helical transmembrane segment at 238 to 258 (FSTCTSHLTAVTLFYGTVLFV) threads the bilayer. Over 259 to 271 (YVMPKSSYSADQV) the chain is Extracellular. Residues 272 to 292 (KVASVVYTVVIPMLNPLIYSL) form a helical membrane-spanning segment. The Cytoplasmic segment spans residues 293–312 (RNKEVKEAMKKLMARTHWFP).

Belongs to the G-protein coupled receptor 1 family.

Its subcellular location is the cell membrane. Functionally, potential odorant receptor. This is Olfactory receptor 5P4 from Mus musculus (Mouse).